The sequence spans 558 residues: Formate--tetrahydrofolate ligase (558 aa).

67-74 (TPAGEGKT) is an ATP binding site.

The protein belongs to the formate--tetrahydrofolate ligase family.

It carries out the reaction (6S)-5,6,7,8-tetrahydrofolate + formate + ATP = (6R)-10-formyltetrahydrofolate + ADP + phosphate. The protein operates within one-carbon metabolism; tetrahydrofolate interconversion. The protein is Formate--tetrahydrofolate ligase of Ruegeria pomeroyi (strain ATCC 700808 / DSM 15171 / DSS-3) (Silicibacter pomeroyi).